We begin with the raw amino-acid sequence, 347 residues long: 3-isopropylmalate dehydrogenase (347 aa).

Residue 76 to 87 (GPKWTDPNNRPE) coordinates NAD(+). Residues arginine 94, arginine 104, arginine 132, and aspartate 217 each coordinate substrate. Mg(2+) is bound by residues aspartate 217, aspartate 241, and aspartate 245. Position 275-287 (275-287 (GSAPDIANEDKAN)) interacts with NAD(+).

The protein belongs to the isocitrate and isopropylmalate dehydrogenases family. LeuB type 1 subfamily. Homodimer. Mg(2+) is required as a cofactor. Requires Mn(2+) as cofactor.

It localises to the cytoplasm. It carries out the reaction (2R,3S)-3-isopropylmalate + NAD(+) = 4-methyl-2-oxopentanoate + CO2 + NADH. Its pathway is amino-acid biosynthesis; L-leucine biosynthesis; L-leucine from 3-methyl-2-oxobutanoate: step 3/4. In terms of biological role, catalyzes the oxidation of 3-carboxy-2-hydroxy-4-methylpentanoate (3-isopropylmalate) to 3-carboxy-4-methyl-2-oxopentanoate. The product decarboxylates to 4-methyl-2 oxopentanoate. In Staphylococcus epidermidis (strain ATCC 12228 / FDA PCI 1200), this protein is 3-isopropylmalate dehydrogenase.